The primary structure comprises 254 residues: Decaprenylphosphoryl-2-keto-beta-D-erythro-pentose reductase (254 aa).

D67 lines the NAD(+) pocket. Y160 functions as the Proton acceptor in the catalytic mechanism. K164 serves as a coordination point for NAD(+).

The protein belongs to the short-chain dehydrogenases/reductases (SDR) family. In terms of assembly, interacts with DprE1 to form an epimerase complex.

Its subcellular location is the periplasm. It catalyses the reaction trans,octa-cis-decaprenylphospho-beta-D-arabinofuranose + NAD(+) = trans,octa-cis-decaprenylphospho-beta-D-erythro-pentofuranosid-2-ulose + NADH + H(+). The protein operates within cell wall biogenesis; cell wall polysaccharide biosynthesis. Functionally, component of the DprE1-DprE2 complex that catalyzes the 2-step epimerization of decaprenyl-phospho-ribose (DPR) to decaprenyl-phospho-arabinose (DPA), a key precursor that serves as the arabinose donor required for the synthesis of cell-wall arabinans. DprE1 catalyzes the first step of epimerization, namely FAD-dependent oxidation of the C2' hydroxyl of DPR to yield the keto intermediate decaprenyl-phospho-2'-keto-D-arabinose (DPX). The intermediate DPX is then transferred to DprE2 subunit of the epimerase complex, most probably through a 'substrate channel' at the interface of DprE1-DprE2 complex. DprE2 then catalyzes the second step of epimerization, the NAD(+)-dependent reduction of DPX that leads to the formation of DPA. This Mycobacterium bovis (strain ATCC BAA-935 / AF2122/97) protein is Decaprenylphosphoryl-2-keto-beta-D-erythro-pentose reductase.